The following is a 74-amino-acid chain: Translational regulator CsrA (74 aa).

The protein belongs to the CsrA/RsmA family. Homodimer; the beta-strands of each monomer intercalate to form a hydrophobic core, while the alpha-helices form wings that extend away from the core.

It localises to the cytoplasm. Its function is as follows. A translational regulator that binds mRNA to regulate translation initiation and/or mRNA stability. Usually binds in the 5'-UTR at or near the Shine-Dalgarno sequence preventing ribosome-binding, thus repressing translation. Its main target seems to be the major flagellin gene, while its function is anatagonized by FliW. The protein is Translational regulator CsrA of Bacillus velezensis (strain DSM 23117 / BGSC 10A6 / LMG 26770 / FZB42) (Bacillus amyloliquefaciens subsp. plantarum).